Consider the following 277-residue polypeptide: Ras suppressor protein 1 (277 aa).

The segment at 1–23 (MSKSLKKLVEESREKNQPEVDMS) is disordered. Ser2 carries the N-acetylserine modification. The span at 7–23 (KLVEESREKNQPEVDMS) shows a compositional bias: basic and acidic residues. 7 LRR repeats span residues 41-63 (HITQLVLSHNKLTTVPPNIAELK), 64-85 (NLEVLNFFNNQIEELPTQISSL), 87-109 (KLKHLNLGMNRLNTLPRGFGSLP), 110-133 (ALEVLDLTYNNLNENSLPGNFFYL), 135-156 (TLRALYLSDNDFEILPPDIGKL), 158-179 (KLQILSLRDNDLISLPKEIGEL), and 181-202 (QLKELHIQGNRLTVLPPELGNL). Residues 250-277 (MQANPEPPKKNNDKSKKISRKPLAAKNK) are disordered. Positions 256–265 (PPKKNNDKSK) are enriched in basic and acidic residues.

Potentially plays a role in the Ras signal transduction pathway. Capable of suppressing v-Ras transformation in vitro. The sequence is that of Ras suppressor protein 1 (RSU1) from Bos taurus (Bovine).